The following is a 114-amino-acid chain: BolA-like protein DDB_G0274169 (114 aa).

The span at 88–98 shows a compositional bias: polar residues; the sequence is TQWKKNNQTKI. The interval 88 to 114 is disordered; it reads TQWKKNNQTKINVDDDKSPSCKGGFGK.

Belongs to the BolA/IbaG family.

The chain is BolA-like protein DDB_G0274169 from Dictyostelium discoideum (Social amoeba).